A 359-amino-acid chain; its full sequence is 4-galactosyl-N-acetylglucosaminide 3-alpha-L-fucosyltransferase 9 (359 aa).

The Cytoplasmic portion of the chain corresponds to 1-11 (MTSTSKGILRP). The helical; Signal-anchor for type II membrane protein transmembrane segment at 12–32 (FLIVCVILACFMACLLIYIKP) threads the bilayer. At 33 to 359 (TNSWVFSPME…VGNLEKWFWN (327 aa)) the chain is on the lumenal side. N62 carries N-linked (GlcNAc...) asparagine glycosylation. The tract at residues 63–168 (ETTILVWVWP…RRDSDIQVPY (106 aa)) is acceptor-binding. Q75 provides a ligand contact to a beta-D-galactosyl-(1-&gt;4)-N-acetyl-beta-D-glucosaminyl derivative. Cystine bridges form between C82–C335, C91–C338, and C190–C238. Residue N101 is glycosylated (N-linked (GlcNAc...) asparagine). E137 contacts a beta-D-galactosyl-(1-&gt;4)-N-acetyl-beta-D-glucosaminyl derivative. Residue E137 is the Nucleophile of the active site. E137 is a binding site for GDP-beta-L-fucose. N153 carries N-linked (GlcNAc...) asparagine glycosylation. Residues Y168, V192, S194, N195, R202, V226, Y241, N246, Y252, E255, and K256 each coordinate GDP-beta-L-fucose. The segment at 169–326 (GFLTVSTNPF…NWRKDFTVNL (158 aa)) is donor-binding. The segment at 327–359 (PRFWESHACLACDHVKRHQEYKSVGNLEKWFWN) is acceptor-binding.

The protein belongs to the glycosyltransferase 10 family. Homodimer. Post-translationally, N-glycosylated with complex-type N-glycans.

It localises to the golgi apparatus. The protein localises to the trans-Golgi network membrane. Its subcellular location is the golgi apparatus membrane. It carries out the reaction a beta-D-galactosyl-(1-&gt;4)-N-acetyl-beta-D-glucosaminyl derivative + GDP-beta-L-fucose = a beta-D-galactosyl-(1-&gt;4)-[alpha-L-fucosyl-(1-&gt;3)]-N-acetyl-beta-D-glucosaminyl derivative + GDP + H(+). The enzyme catalyses an alpha-Neu5Ac-(2-&gt;3)-beta-D-Gal-(1-&gt;4)-beta-D-GlcNAc-(1-&gt;3)-beta-D-Gal-(1-&gt;4)-beta-D-GlcNAc derivative + GDP-beta-L-fucose = an alpha-Neu5Ac-(2-&gt;3)-beta-D-Gal-(1-&gt;4)-beta-D-GlcNAc-(1-&gt;3)-beta-D-Gal-(1-&gt;4)-[alpha-L-Fuc-(1-&gt;3)]-beta-D-GlcNAc derivative + GDP + H(+). It catalyses the reaction alpha-N-glycoloylneuraminosyl-(2-&gt;3)-beta-D-galactosyl-(1-&gt;4)-N-acetyl-beta-D-glucosaminyl-(1-&gt;3)-beta-D-galactosyl-(1-&gt;4)-N-acetyl-beta-D-glucosaminyl-(1-&gt;3)-beta-D-galactosyl-(1-&gt;4)-beta-D-glucosyl-(1&lt;-&gt;1')-ceramide + GDP-beta-L-fucose = alpha-N-glycoloylneuraminosyl-(2-&gt;3)-beta-D-galactosyl-(1-&gt;4)-N-acetyl-beta-D-glucosaminyl-(1-&gt;3)-beta-D-galactosyl-(1-&gt;4)-[alpha-L-fucosyl-(1-&gt;3)]-N-acetyl-beta-D-glucosaminyl-(1-&gt;3)-beta-D-galactosyl-(1-&gt;4)-beta-D-glucosyl-(1&lt;-&gt;1')-ceramide + GDP + H(+). The catalysed reaction is alpha-D-galactosyl-(1-&gt;3)-beta-D-galactosyl-(1-&gt;4)-N-acetyl-beta-D-glucosaminyl-(1-&gt;3)-beta-D-galactosyl-(1-&gt;4)-beta-D-glucosyl-(1&lt;-&gt;1')-ceramide + GDP-beta-L-fucose = a neolactoside IV(3)-alpha-Gal,III(3)-alpha-Fuc-nLc4Cer + GDP + H(+). It carries out the reaction a neolactoside nLc4Cer + GDP-beta-L-fucose = a neolactoside III(3)-alpha-Fuc-nLc4Cer + GDP + H(+). The enzyme catalyses an N-acetyl-alpha-neuraminyl-(2-&gt;3)-beta-D-galactosyl-(1-&gt;4)-N-acetyl-beta-D-glucosaminyl derivative + GDP-beta-L-fucose = an alpha-Neu5Ac-(2-&gt;3)-beta-D-Gal-(1-&gt;4)-[alpha-L-Fuc-(1-&gt;3)]-beta-D-GlcNAc derivative + GDP + H(+). It catalyses the reaction beta-D-Gal-(1-&gt;4)-beta-D-GlcNAc-(1-&gt;3)-beta-D-Gal-(1-&gt;4)-D-Glc + GDP-beta-L-fucose = beta-D-Gal-(1-&gt;4)-[alpha-L-Fuc-(1-&gt;3)]-beta-D-GlcNAc-(1-&gt;3)-beta-D-Gal-(1-&gt;4)-D-Glc + GDP + H(+). The catalysed reaction is an alpha-L-Fuc-(1-&gt;2)-beta-D-Gal-(1-&gt;4)-beta-D-GlcNAc derivative + GDP-beta-L-fucose = an alpha-L-Fuc-(1-&gt;2)-beta-D-Gal-(1-&gt;4)-[alpha-L-Fuc-(1-&gt;3)]-beta-D-GlcNAc derivative + GDP + H(+). Its pathway is protein modification; protein glycosylation. The protein operates within glycolipid biosynthesis. With respect to regulation, activated by Mn2+. Functionally, catalyzes alpha(1-&gt;3) linkage of fucosyl moiety transferred from GDP-beta-L-fucose to N-acetyl glucosamine (GlcNAc) within type 2 lactosamine (LacNAc, beta-D-Gal-(1-&gt;4)-beta-D-GlcNAc-) glycan attached to glycolipids and N- or O-linked glycoproteins. Fucosylates distal type 2 LacNAc and its fucosylated (H-type 2 LacNAc) and sialylated (sialyl-type 2 LacNAc) derivatives to form Lewis x (Lex) (CD15) and Lewis y (Ley) antigenic epitopes involved in cell adhesion and differentiation. Generates Lex epitopes in the brain, presumably playing a role in the maintenance of neuronal stemness and neurite outgrowth in progenitor neural cells. Fucosylates the internal type 2 LacNAc unit of the polylactosamine chain to form VIM-2 antigen that serves as recognition epitope for SELE. Can also modify milk oligosaccharides in particular type 2 tetrasaccharide LNnT. This chain is 4-galactosyl-N-acetylglucosaminide 3-alpha-L-fucosyltransferase 9, found in Cricetulus griseus (Chinese hamster).